A 455-amino-acid polypeptide reads, in one-letter code: Argininosuccinate lyase (455 aa).

This sequence belongs to the lyase 1 family. Argininosuccinate lyase subfamily.

The protein resides in the cytoplasm. The catalysed reaction is 2-(N(omega)-L-arginino)succinate = fumarate + L-arginine. It participates in amino-acid biosynthesis; L-arginine biosynthesis; L-arginine from L-ornithine and carbamoyl phosphate: step 3/3. The chain is Argininosuccinate lyase from Shewanella baltica (strain OS223).